The chain runs to 389 residues: Migration and invasion-inhibitory protein (389 aa).

Residues 44 to 54 are compositionally biased toward low complexity; sequence LDYSSSSNNLE. Disordered regions lie at residues 44 to 80 and 131 to 150; these read LDYSSSSNNLEMPLSQETSASSVAPNSQDKRHVWDPL and KRPVSLGGPKGLGPDKAQVP. The segment covering 58 to 70 has biased composition (polar residues); the sequence is SQETSASSVAPNS. A compositionally biased stretch (basic and acidic residues) spans 71 to 80; it reads QDKRHVWDPL. S309 is subject to Phosphoserine.

In terms of assembly, interacts with IGFBP2.

In terms of biological role, inhibits glioma cells invasion and down-regulates adhesion- and motility-associated genes such as NFKB2 and ICAM1. Exhibits opposing effects to IGFBP2 on cell invasion. In Rattus norvegicus (Rat), this protein is Migration and invasion-inhibitory protein (Miip).